A 212-amino-acid polypeptide reads, in one-letter code: Agamous-like MADS-box protein MADS9 (212 aa).

Residues 1–61 (MGRGKIEIKR…GKMHEYCSPS (61 aa)) enclose the MADS-box domain. One can recognise a K-box domain in the interval 84 to 170 (HENLNNELDR…NYIVHHQGMP (87 aa)).

As to expression, expressed during flower development in stamens and petals.

The protein resides in the nucleus. Probable transcription factor that may play role in specifying stamen and petal organ identity. In Vitis vinifera (Grape), this protein is Agamous-like MADS-box protein MADS9.